Consider the following 226-residue polypeptide: Thymidylate kinase (226 aa).

Gly-12 to Ser-19 provides a ligand contact to ATP.

It belongs to the thymidylate kinase family.

It catalyses the reaction dTMP + ATP = dTDP + ADP. In terms of biological role, phosphorylation of dTMP to form dTDP in both de novo and salvage pathways of dTTP synthesis. The chain is Thymidylate kinase from Verminephrobacter eiseniae (strain EF01-2).